The primary structure comprises 485 residues: MQLYNTLTRKKEKFIPQREGKASVYVCGITAYDLCHLGHARSSVAFDVLVRYLRHTGLDVTFVRNFTDVDDKIIKRAGETGLTSTEVAEKYMAAFHEDMDRLGCLRADIEPRCTQHIGEMIALCEDLISKGKAYSTASGDVYFRVRSFASYGKLSGRDVDDMRSGARVAPGEEKEDPLDFALWKSAKPGEPYWESPWGNGRPGWHIECSAMSEKHLPLPLDIHGGGQDLVFPHHENEIAQTEAATGKEFARYWVHNGFVQVNAEKMSKSLGNFSTIRDILQGYLPETLRYFLLTKHYRSPIDFTFDGMDEAEKNLRRIYQTLNLVENELQKTKWSAAPLPEEVLSEMDETERAWNEAMEDDLNTAAALGHIFGLVRLVNRIIEDKTMRKSAQARDALLRMQSMMARWGAVLGLFTRQPAEFLREMRDCRAARRDVDTARVETLLLERQEARKAKDFERSDAIREELARMGVEVQDTPAGAAWDIA.

Position 27 (cysteine 27) interacts with Zn(2+). Residues 29-39 carry the 'HIGH' region motif; it reads ITAYDLCHLGH. Zn(2+) is bound by residues cysteine 208, histidine 233, and glutamate 237. Positions 265 to 269 match the 'KMSKS' region motif; that stretch reads KMSKS. Residue lysine 268 participates in ATP binding.

This sequence belongs to the class-I aminoacyl-tRNA synthetase family. In terms of assembly, monomer. Requires Zn(2+) as cofactor.

The protein localises to the cytoplasm. It catalyses the reaction tRNA(Cys) + L-cysteine + ATP = L-cysteinyl-tRNA(Cys) + AMP + diphosphate. The polypeptide is Cysteine--tRNA ligase (Oleidesulfovibrio alaskensis (strain ATCC BAA-1058 / DSM 17464 / G20) (Desulfovibrio alaskensis)).